A 194-amino-acid chain; its full sequence is Cyclin-dependent kinase inhibitor 4 (194 aa).

The span at 49–58 (LELRSRRLEK) shows a compositional bias: basic and acidic residues. Disordered stretches follow at residues 49–70 (LELR…PRRR) and 107–139 (TRET…SHCK).

It belongs to the CDI family. ICK/KRP subfamily.

In Oryza sativa subsp. japonica (Rice), this protein is Cyclin-dependent kinase inhibitor 4 (KRP4).